We begin with the raw amino-acid sequence, 615 residues long: Elongation factor 4 (615 aa).

In terms of domain architecture, tr-type G spans 14 to 200 (ARIRNFCIIA…KVVELIPAPT (187 aa)). GTP is bound by residues 26 to 31 (DHGKST) and 147 to 150 (NKID).

It belongs to the TRAFAC class translation factor GTPase superfamily. Classic translation factor GTPase family. LepA subfamily.

It localises to the cell membrane. The enzyme catalyses GTP + H2O = GDP + phosphate + H(+). Functionally, required for accurate and efficient protein synthesis under certain stress conditions. May act as a fidelity factor of the translation reaction, by catalyzing a one-codon backward translocation of tRNAs on improperly translocated ribosomes. Back-translocation proceeds from a post-translocation (POST) complex to a pre-translocation (PRE) complex, thus giving elongation factor G a second chance to translocate the tRNAs correctly. Binds to ribosomes in a GTP-dependent manner. The polypeptide is Elongation factor 4 (Corynebacterium glutamicum (strain ATCC 13032 / DSM 20300 / JCM 1318 / BCRC 11384 / CCUG 27702 / LMG 3730 / NBRC 12168 / NCIMB 10025 / NRRL B-2784 / 534)).